Consider the following 75-residue polypeptide: Cruzioseptin-8 (75 aa).

Positions 1 to 22 (MAFLKKCLFLVLFLGLVSLSIC) are cleaved as a signal peptide. The propeptide occupies 23 to 43 (EEEKREEENEEVQEDDDQSEE). Residues 25-44 (EKREEENEEVQEDDDQSEEK) are disordered. Residues 30-41 (ENEEVQEDDDQS) show a composition bias toward acidic residues. Q72 bears the Glutamine amide mark. Residues 74–75 (EQ) constitute a propeptide that is removed on maturation.

Expressed by the skin glands.

The protein localises to the secreted. In terms of biological role, has antimicrobial activity. This Cruziohyla calcarifer (Splendid leaf frog) protein is Cruzioseptin-8.